We begin with the raw amino-acid sequence, 102 residues long: Small ribosomal subunit protein uS10 (102 aa).

This sequence belongs to the universal ribosomal protein uS10 family. In terms of assembly, part of the 30S ribosomal subunit.

Functionally, involved in the binding of tRNA to the ribosomes. In Lactococcus lactis subsp. lactis (strain IL1403) (Streptococcus lactis), this protein is Small ribosomal subunit protein uS10.